The chain runs to 338 residues: Oxygen-dependent coproporphyrinogen-III oxidase (338 aa).

Serine 104 is a substrate binding site. Histidine 108 and histidine 118 together coordinate a divalent metal cation. The active-site Proton donor is histidine 118. 120 to 122 (NYR) contributes to the substrate binding site. A divalent metal cation-binding residues include histidine 152 and histidine 182. The important for dimerization stretch occupies residues 274 to 309 (YVEFNLVYDRGTIFGLQTNGRTESILMSLPPLVRWE).

This sequence belongs to the aerobic coproporphyrinogen-III oxidase family. Homodimer. Requires a divalent metal cation as cofactor.

It localises to the cytoplasm. The enzyme catalyses coproporphyrinogen III + O2 + 2 H(+) = protoporphyrinogen IX + 2 CO2 + 2 H2O. Its pathway is porphyrin-containing compound metabolism; protoporphyrin-IX biosynthesis; protoporphyrinogen-IX from coproporphyrinogen-III (O2 route): step 1/1. Functionally, involved in the heme and chlorophyll biosynthesis. Catalyzes the aerobic oxidative decarboxylation of propionate groups of rings A and B of coproporphyrinogen-III to yield the vinyl groups in protoporphyrinogen-IX. This Thermosynechococcus vestitus (strain NIES-2133 / IAM M-273 / BP-1) protein is Oxygen-dependent coproporphyrinogen-III oxidase.